Here is a 546-residue protein sequence, read N- to C-terminus: MLVNAIRQKVSEVISKAYGSEIEFEVEIPPRKEFGDLSTNVAMKLAKTLKKNPREIAQEIVKSLDEDPSFDRIEIMGPGFINFFLSNELLRGVVKTVLEKKDEYGRENVGNGMKVQFEYGSANPTGPFTVGHGRQIIIGDVLSEVYKELGYDVTREMYINDAGKQIRLLAQSLWARYNQLLGVEKEIPEGGYRGEYLVDIARDLVNEIGDRYKDLWNEEVEEFFKQTALNRILSSMKDTLEKIGSSFDVYFSEKSLIEDGTVEEVLKLLKNKDVVYEKDGAVWLKVSAFIDEEDKVLVRSDGTYTYFMTDIAYHYKKYKRGFRKVYDIWGSDHHGHIPRMKAAMKALDIPDDFFNVILHQFVTLKRGGEIVRMSTRAGEFVTLDELLDEVGRDATRYFFAMVDPNTHMVFDIDLAKAKSMDNPVYYVQYAHARIHNLFSNAEKKGVKFEEGKHLELLGNEEERVLMRNLGMFNTALKEVAQMFAPNRLTNYLQSLAESFHAFYTKHVIVDPENPELSNARLNLALATGIVLRKGLKLIGVSAPERM.

A 'HIGH' region motif is present at residues 122-132; sequence ANPTGPFTVGH.

Belongs to the class-I aminoacyl-tRNA synthetase family. Monomer.

It localises to the cytoplasm. The enzyme catalyses tRNA(Arg) + L-arginine + ATP = L-arginyl-tRNA(Arg) + AMP + diphosphate. This Thermotoga maritima (strain ATCC 43589 / DSM 3109 / JCM 10099 / NBRC 100826 / MSB8) protein is Arginine--tRNA ligase (argS).